Reading from the N-terminus, the 175-residue chain is NADH dehydrogenase [ubiquinone] 1 alpha subcomplex assembly factor 4 (175 aa).

A lipid anchor (N-myristoyl glycine) is attached at Gly-2. Position 35 is a phosphoserine (Ser-35).

This sequence belongs to the NDUFAF4 family. Binds calmodulin. Interacts with NDUFAF3. In terms of assembly, (Microbial infection) Interacts with the vesicular stomatitis virus matrix protein/M; the interaction inhibits viral propagation. Phosphorylated on serine. Prolactin stimulate serine phosphorylation.

Its subcellular location is the mitochondrion. The protein localises to the membrane. In terms of biological role, involved in the assembly of mitochondrial NADH:ubiquinone oxidoreductase complex (complex I). May be involved in cell proliferation and survival of hormone-dependent tumor cells. May be a regulator of breast tumor cell invasion. This chain is NADH dehydrogenase [ubiquinone] 1 alpha subcomplex assembly factor 4, found in Homo sapiens (Human).